A 151-amino-acid chain; its full sequence is Protein archease-like (151 aa).

Ca(2+) contacts are provided by D20, D150, and I151.

It belongs to the archease family.

Component of the tRNA-splicing ligase complex required to facilitate the enzymatic turnover of catalytic subunit RtcB. The sequence is that of Protein archease-like from Dictyostelium discoideum (Social amoeba).